The sequence spans 556 residues: Formate--tetrahydrofolate ligase 2 (556 aa).

Thr65–Ser72 is a binding site for ATP.

This sequence belongs to the formate--tetrahydrofolate ligase family.

The enzyme catalyses (6S)-5,6,7,8-tetrahydrofolate + formate + ATP = (6R)-10-formyltetrahydrofolate + ADP + phosphate. It participates in one-carbon metabolism; tetrahydrofolate interconversion. This is Formate--tetrahydrofolate ligase 2 from Streptococcus sanguinis (strain SK36).